The following is a 392-amino-acid chain: MTLLGTALRPAATRVMLLGAGELGKEVAIECQRLGIEVIAVDRYPDAPAMHVAHRSHVINMLDGEALRHVITEEKPHYIVPEIEAIATDTLRELEDEGLNVVPCARATQLTMNREGIRRLAAEELGLPTSTYRFADSEASFHDAVAAVGFPCIVKPVMSSSGKGQSFIRSAEQLAQAWEYAQQGGRAGAGRVIVEGVVKFDFEITLLTVSAVDGVHFCAPVGHRQQDGDYRESWQPQQMSELALKRAQEIARHVVLALGGHGLFGVELFVCGDEVIFSEVSPRPHDTGMVTLISQDLSEFALHVRAFLGMPIGAIRQYGPAASAVILPQLTSQNVTFDDVHAAVGAGVQVRLFGKPEIDGTRRLGVALATGENVEEAVIRAKKAASRVTVKG.

Residues 22–23 (EL) and E82 each bind N(1)-(5-phospho-beta-D-ribosyl)glycinamide. ATP is bound by residues R114, K155, 160–165 (SSGKGQ), 195–198 (EGVV), and E203. Residues 119–308 (RLAAEELGLP…EFALHVRAFL (190 aa)) enclose the ATP-grasp domain. The Mg(2+) site is built by E267 and E279. Residues D286, K355, and 362–363 (RR) contribute to the N(1)-(5-phospho-beta-D-ribosyl)glycinamide site.

Belongs to the PurK/PurT family. As to quaternary structure, homodimer.

It catalyses the reaction N(1)-(5-phospho-beta-D-ribosyl)glycinamide + formate + ATP = N(2)-formyl-N(1)-(5-phospho-beta-D-ribosyl)glycinamide + ADP + phosphate + H(+). Its pathway is purine metabolism; IMP biosynthesis via de novo pathway; N(2)-formyl-N(1)-(5-phospho-D-ribosyl)glycinamide from N(1)-(5-phospho-D-ribosyl)glycinamide (formate route): step 1/1. In terms of biological role, involved in the de novo purine biosynthesis. Catalyzes the transfer of formate to 5-phospho-ribosyl-glycinamide (GAR), producing 5-phospho-ribosyl-N-formylglycinamide (FGAR). Formate is provided by PurU via hydrolysis of 10-formyl-tetrahydrofolate. This is Formate-dependent phosphoribosylglycinamide formyltransferase from Salmonella choleraesuis (strain SC-B67).